The primary structure comprises 334 residues: Holliday junction branch migration complex subunit RuvB (334 aa).

Residues 4-184 (ADRLIQPQDL…FGIPLRLEFY (181 aa)) are large ATPase domain (RuvB-L). ATP contacts are provided by residues R24, G65, K68, T69, T70, 131–133 (EDY), R174, Y184, and R221. T69 is a Mg(2+) binding site. The tract at residues 185-255 (NVRDLSSIVA…VAQSALDLLD (71 aa)) is small ATPAse domain (RuvB-S). The tract at residues 258–334 (SEGFDYMDRK…YSHFDLIKPD (77 aa)) is head domain (RuvB-H). R294, R313, and R318 together coordinate DNA.

This sequence belongs to the RuvB family. Homohexamer. Forms an RuvA(8)-RuvB(12)-Holliday junction (HJ) complex. HJ DNA is sandwiched between 2 RuvA tetramers; dsDNA enters through RuvA and exits via RuvB. An RuvB hexamer assembles on each DNA strand where it exits the tetramer. Each RuvB hexamer is contacted by two RuvA subunits (via domain III) on 2 adjacent RuvB subunits; this complex drives branch migration. In the full resolvosome a probable DNA-RuvA(4)-RuvB(12)-RuvC(2) complex forms which resolves the HJ.

Its subcellular location is the cytoplasm. The catalysed reaction is ATP + H2O = ADP + phosphate + H(+). The RuvA-RuvB-RuvC complex processes Holliday junction (HJ) DNA during genetic recombination and DNA repair, while the RuvA-RuvB complex plays an important role in the rescue of blocked DNA replication forks via replication fork reversal (RFR). RuvA specifically binds to HJ cruciform DNA, conferring on it an open structure. The RuvB hexamer acts as an ATP-dependent pump, pulling dsDNA into and through the RuvAB complex. RuvB forms 2 homohexamers on either side of HJ DNA bound by 1 or 2 RuvA tetramers; 4 subunits per hexamer contact DNA at a time. Coordinated motions by a converter formed by DNA-disengaged RuvB subunits stimulates ATP hydrolysis and nucleotide exchange. Immobilization of the converter enables RuvB to convert the ATP-contained energy into a lever motion, pulling 2 nucleotides of DNA out of the RuvA tetramer per ATP hydrolyzed, thus driving DNA branch migration. The RuvB motors rotate together with the DNA substrate, which together with the progressing nucleotide cycle form the mechanistic basis for DNA recombination by continuous HJ branch migration. Branch migration allows RuvC to scan DNA until it finds its consensus sequence, where it cleaves and resolves cruciform DNA. The polypeptide is Holliday junction branch migration complex subunit RuvB (Shewanella amazonensis (strain ATCC BAA-1098 / SB2B)).